The sequence spans 180 residues: Insulin-like growth factor 2 (180 aa).

The first 24 residues, 1–24 (MGIPVGKSMLVLLISLAFALCCIA), serve as a signal peptide directing secretion. The tract at residues 25–52 (AYGPGETLCGGELVDTLQFVCSDRGFYF) is b. 3 disulfides stabilise this stretch: C33–C71, C45–C84, and C70–C75. Residues 53–64 (SRPSSRANRRSR) form a c region. An a region spans residues 65-85 (GIVEECCFRSCDLALLETYCA). The d stretch occupies residues 86 to 91 (TPAKSE). A propeptide spans 92 to 180 (RDVSTSQAVL…ASSEMSSNHQ (89 aa)) (e peptide). The interval 157 to 180 (PLIVLPPKDPAHGGASSEMSSNHQ) is disordered.

This sequence belongs to the insulin family. As to quaternary structure, interacts with MYORG; this interaction is required for IGF2 secretion. Interacts with integrins ITGAV:ITGB3 and ITGA6:ITGB4; integrin-binding is required for IGF2 signaling. Interacts with IGFBP2. Proteolytically processed by PCSK4, proIGF2 is cleaved at Arg-128 and Arg-92 to generate big-IGF2 and mature IGF2. In terms of tissue distribution, expressed in the heart, blood serum, kidney and skeletal muscle including the tibialis anterior muscle.

The protein localises to the secreted. In terms of biological role, the insulin-like growth factors possess growth-promoting activity. Major fetal growth hormone in mammals. Plays a key role in regulating fetoplacental development. IGF2 is influenced by placental lactogen. Also involved in tissue differentiation. In adults, involved in glucose metabolism in adipose tissue, skeletal muscle and liver. Acts as a ligand for integrin which is required for IGF2 signaling. Positively regulates myogenic transcription factor MYOD1 function by facilitating the recruitment of transcriptional coactivators, thereby controlling muscle terminal differentiation. Inhibits myoblast differentiation and modulates metabolism via increasing the mitochondrial respiration rate. Its function is as follows. Preptin undergoes glucose-mediated co-secretion with insulin, and acts as a physiological amplifier of glucose-mediated insulin secretion. Exhibits osteogenic properties by increasing osteoblast mitogenic activity through phosphoactivation of MAPK1 and MAPK3. The polypeptide is Insulin-like growth factor 2 (Mus musculus (Mouse)).